The primary structure comprises 391 residues: GTPase Obg (391 aa).

In terms of domain architecture, Obg spans Met1 to Ile159. Residues Ala160–Asp327 form the OBG-type G domain. GTP-binding positions include Gly166 to Ser173, Phe191 to His195, Asp212 to Gly215, Ser279 to Asp282, and Ser308 to Ile310. Mg(2+)-binding residues include Ser173 and Thr193. The tract at residues Thr352–Arg391 is disordered. Residues Asp366–Glu382 show a composition bias toward acidic residues.

It belongs to the TRAFAC class OBG-HflX-like GTPase superfamily. OBG GTPase family. As to quaternary structure, monomer. Requires Mg(2+) as cofactor.

The protein localises to the cytoplasm. In terms of biological role, an essential GTPase which binds GTP, GDP and possibly (p)ppGpp with moderate affinity, with high nucleotide exchange rates and a fairly low GTP hydrolysis rate. Plays a role in control of the cell cycle, stress response, ribosome biogenesis and in those bacteria that undergo differentiation, in morphogenesis control. The chain is GTPase Obg from Rhodospirillum rubrum (strain ATCC 11170 / ATH 1.1.1 / DSM 467 / LMG 4362 / NCIMB 8255 / S1).